A 786-amino-acid polypeptide reads, in one-letter code: Endonuclease MutS2 (786 aa).

332 to 339 is a binding site for ATP; sequence GPNTGGKT. Residues 711-786 form the Smr domain; that stretch reads IDLRGMDSME…GTGVTVVELK (76 aa).

Belongs to the DNA mismatch repair MutS family. MutS2 subfamily. Homodimer. Binds to stalled ribosomes, contacting rRNA.

Its function is as follows. Endonuclease that is involved in the suppression of homologous recombination and thus may have a key role in the control of bacterial genetic diversity. Acts as a ribosome collision sensor, splitting the ribosome into its 2 subunits. Detects stalled/collided 70S ribosomes which it binds and splits by an ATP-hydrolysis driven conformational change. Acts upstream of the ribosome quality control system (RQC), a ribosome-associated complex that mediates the extraction of incompletely synthesized nascent chains from stalled ribosomes and their subsequent degradation. Probably generates substrates for RQC. The polypeptide is Endonuclease MutS2 (Clostridium tetani (strain Massachusetts / E88)).